We begin with the raw amino-acid sequence, 264 residues long: S-adenosylmethionine decarboxylase proenzyme (264 aa).

S113 serves as the catalytic Schiff-base intermediate with substrate; via pyruvic acid. Pyruvic acid (Ser); by autocatalysis is present on S113. The Proton acceptor; for processing activity role is filled by H118. The active-site Proton donor; for catalytic activity is C141.

This sequence belongs to the prokaryotic AdoMetDC family. Type 2 subfamily. As to quaternary structure, heterooctamer of four alpha and four beta chains arranged as a tetramer of alpha/beta heterodimers. The cofactor is pyruvate. Is synthesized initially as an inactive proenzyme. Formation of the active enzyme involves a self-maturation process in which the active site pyruvoyl group is generated from an internal serine residue via an autocatalytic post-translational modification. Two non-identical subunits are generated from the proenzyme in this reaction, and the pyruvate is formed at the N-terminus of the alpha chain, which is derived from the carboxyl end of the proenzyme. The post-translation cleavage follows an unusual pathway, termed non-hydrolytic serinolysis, in which the side chain hydroxyl group of the serine supplies its oxygen atom to form the C-terminus of the beta chain, while the remainder of the serine residue undergoes an oxidative deamination to produce ammonia and the pyruvoyl group blocking the N-terminus of the alpha chain.

The enzyme catalyses S-adenosyl-L-methionine + H(+) = S-adenosyl 3-(methylsulfanyl)propylamine + CO2. It participates in amine and polyamine biosynthesis; S-adenosylmethioninamine biosynthesis; S-adenosylmethioninamine from S-adenosyl-L-methionine: step 1/1. Functionally, catalyzes the decarboxylation of S-adenosylmethionine to S-adenosylmethioninamine (dcAdoMet), the propylamine donor required for the synthesis of the polyamines spermine and spermidine from the diamine putrescine. In Pseudomonas aeruginosa (strain ATCC 15692 / DSM 22644 / CIP 104116 / JCM 14847 / LMG 12228 / 1C / PRS 101 / PAO1), this protein is S-adenosylmethionine decarboxylase proenzyme.